We begin with the raw amino-acid sequence, 163 residues long: Bursicon (163 aa).

The N-terminal stretch at 1-23 (MKSTFLVVLELAFFLLPGRVLYA) is a signal peptide. Cystine bridges form between Cys39–Cys88, Cys53–Cys102, Cys63–Cys123, Cys67–Cys125, and Cys85–Cys128. Residues 39-129 (CQVTPVIHVL…PLECMCRPCT (91 aa)) enclose the CTCK domain.

As to quaternary structure, heterodimer of burs and pburs.

The protein localises to the secreted. In terms of biological role, final heterodimeric neurohormone released at the end of the molting cycle, involved in the sclerotization (tanning) of the insect cuticle, melanization and wing spreading. This Anopheles gambiae (African malaria mosquito) protein is Bursicon (burs124).